Consider the following 246-residue polypeptide: Carboxylesterase (246 aa).

Catalysis depends on Ser93, which acts as the Nucleophile. Active-site charge relay system residues include Asp192 and His222.

It belongs to the lipase/esterase LIP3/BchO family. Homodimer.

The catalysed reaction is a carboxylic ester + H2O = an alcohol + a carboxylate + H(+). Functionally, involved in the detoxification of xenobiotics. Shows maximal activity with C6 substrates, with gradually decreasing activity from C8 to C12 substrates. No activity for higher chain length substrates acids rather than long-chain ones. The polypeptide is Carboxylesterase (est) (Geobacillus stearothermophilus (Bacillus stearothermophilus)).